The chain runs to 330 residues: Apolipoprotein E (330 aa).

The signal sequence occupies residues 1-18; sequence MKVLWAALVVALLAGCWA. Positions 21–43 are disordered; the sequence is EPESPLQGKPEPELEPELEPKRE. 7 repeat units span residues 96 to 117, 118 to 139, 140 to 161, 162 to 183, 184 to 205, 206 to 227, and 247 to 268. The interval 96 to 268 is 7 X 22 AA approximate tandem repeats; sequence TLMEETMKEI…HLDEVREQME (173 aa). Met159 is modified (methionine sulfoxide). Ser163 is subject to Phosphoserine. Residues 174 to 184 form an LDL and other lipoprotein receptors binding region; sequence HMRKLRKRVLR. 178–181 contacts heparin; the sequence is LRKR. Residues 226–303 form a lipid-binding and lipoprotein association region; the sequence is HANLATQPLR…SWFEPLVEDM (78 aa). 242–249 is a binding site for heparin; the sequence is GQQLRGRL. The interval 279–330 is homooligomerization; the sequence is NQMRQQVEAFQARLKSWFEPLVEDMQRQWAGLVEKVQVAVGTSPTTPPLETK. Residues 291–303 form a specificity for association with VLDL region; it reads RLKSWFEPLVEDM.

Belongs to the apolipoprotein A1/A4/E family. Homotetramer. May interact with ABCA1; functionally associated with ABCA1 in the biogenesis of HDLs. May interact with APP/A4 amyloid-beta peptide; the interaction is extremely stable in vitro but its physiological significance is unclear. May interact with MAPT. May interact with MAP2. In the cerebrospinal fluid, interacts with secreted SORL1. Interacts with PMEL; this allows the loading of PMEL luminal fragment on ILVs to induce fibril nucleation. APOE exists as multiple glycosylated and sialylated glycoforms within cells and in plasma. The extent of glycosylation and sialylation are tissue and context specific. In terms of processing, glycated in plasma VLDL. Post-translationally, phosphorylated by FAM20C in the extracellular medium.

It localises to the secreted. Its subcellular location is the extracellular space. It is found in the extracellular matrix. The protein localises to the extracellular vesicle. The protein resides in the endosome. It localises to the multivesicular body. Functionally, APOE is an apolipoprotein, a protein associating with lipid particles, that mainly functions in lipoprotein-mediated lipid transport between organs via the plasma and interstitial fluids. APOE is a core component of plasma lipoproteins and is involved in their production, conversion and clearance. Apolipoproteins are amphipathic molecules that interact both with lipids of the lipoprotein particle core and the aqueous environment of the plasma. As such, APOE associates with chylomicrons, chylomicron remnants, very low density lipoproteins (VLDL) and intermediate density lipoproteins (IDL) but shows a preferential binding to high-density lipoproteins (HDL). It also binds a wide range of cellular receptors including the LDL receptor/LDLR, the LDL receptor-related proteins LRP1, LRP2 and LRP8 and the very low-density lipoprotein receptor/VLDLR that mediate the cellular uptake of the APOE-containing lipoprotein particles. Finally, APOE also has a heparin-binding activity and binds heparan-sulfate proteoglycans on the surface of cells, a property that supports the capture and the receptor-mediated uptake of APOE-containing lipoproteins by cells. A main function of APOE is to mediate lipoprotein clearance through the uptake of chylomicrons, VLDLs, and HDLs by hepatocytes. APOE is also involved in the biosynthesis by the liver of VLDLs as well as their uptake by peripheral tissues ensuring the delivery of triglycerides and energy storage in muscle, heart and adipose tissues. By participating in the lipoprotein-mediated distribution of lipids among tissues, APOE plays a critical role in plasma and tissues lipid homeostasis. APOE is also involved in two steps of reverse cholesterol transport, the HDLs-mediated transport of cholesterol from peripheral tissues to the liver, and thereby plays an important role in cholesterol homeostasis. First, it is functionally associated with ABCA1 in the biogenesis of HDLs in tissues. Second, it is enriched in circulating HDLs and mediates their uptake by hepatocytes. APOE also plays an important role in lipid transport in the central nervous system, regulating neuron survival and sprouting. This Neomonachus schauinslandi (Hawaiian monk seal) protein is Apolipoprotein E (APOE).